The following is a 41-amino-acid chain: Large ribosomal subunit protein bL36A (41 aa).

It belongs to the bacterial ribosomal protein bL36 family.

In Aeromonas salmonicida (strain A449), this protein is Large ribosomal subunit protein bL36A.